The sequence spans 457 residues: Zinc finger protein ZIPIC (457 aa).

In terms of domain architecture, ZAD spans 3-84; it reads CCICQFSVRV…ILELIHSPYM (82 aa). 6 C2H2-type zinc fingers span residues 257 to 280, 284 to 306, 312 to 334, 340 to 362, 369 to 391, and 397 to 419; these read IQCP…KREH, YVCD…LQNH, FACP…MAWH, YQCD…KMIH, LECQ…MRSH, and FACP…LREH. The C2H2-type 7; degenerate zinc-finger motif lies at 430-448; the sequence is FHCSKCTHTFINEQNYDAH.

In terms of assembly, interacts (via region between the ZAD domain and the first zinc finger domain) with Cp190 (via centrosomal targeting M domain); the interaction is direct. Interacts with pita.

The protein resides in the nucleus. It localises to the chromosome. Its function is as follows. Insulator DNA-binding protein. Recruits Cp190 and cooperatively binds to chromatin promoter regions to exert transcriptional regulator and chromatin insulator functions. Chromatin insulators are regulatory elements that establish independent domains of transcriptional activity within eukaryotic genomes. Insulators are proposed to structure the chromatin fiber into independent domains of differing transcriptional potential by promoting the formation of distinct chromatin loops to form topologically associating domains (TADs). Chromatin binding sites often cluster with those of other insulator DNA-binding proteins such as pita, CTCF and BEAF-32, but not Su(Hw). This is Zinc finger protein ZIPIC from Drosophila melanogaster (Fruit fly).